A 258-amino-acid polypeptide reads, in one-letter code: uncharacterized protein (258 aa).

5 helical membrane-spanning segments follow: residues 14-34 (LAFP…LAAI), 53-73 (VIIW…YFFV), 110-130 (AALC…WLAL), 185-205 (GLAL…GIIF), and 238-258 (GINT…AQLI).

The protein belongs to the TMEM19 family.

Its subcellular location is the cell membrane. This is an uncharacterized protein from Synechocystis sp. (strain ATCC 27184 / PCC 6803 / Kazusa).